Here is a 208-residue protein sequence, read N- to C-terminus: UPF0637 protein BcerKBAB4_3786 (208 aa).

The protein belongs to the UPF0637 family.

This is UPF0637 protein BcerKBAB4_3786 from Bacillus mycoides (strain KBAB4) (Bacillus weihenstephanensis).